A 340-amino-acid chain; its full sequence is Protein-arginine kinase (340 aa).

In terms of domain architecture, Phosphagen kinase C-terminal spans 21–242 (VVLSSRIRLA…EQIIMQERVA (222 aa)). ATP is bound by residues 24–28 (SSRIR), His-79, Arg-113, 164–168 (RASVM), and 195–200 (RGIYGE).

The protein belongs to the ATP:guanido phosphotransferase family.

It carries out the reaction L-arginyl-[protein] + ATP = N(omega)-phospho-L-arginyl-[protein] + ADP + H(+). In terms of biological role, catalyzes the specific phosphorylation of arginine residues in proteins. This is Protein-arginine kinase from Listeria innocua serovar 6a (strain ATCC BAA-680 / CLIP 11262).